We begin with the raw amino-acid sequence, 164 residues long: Cyclic pyranopterin monophosphate synthase (164 aa).

Residues 73–75 (LCH) and 111–112 (ME) each bind substrate. Asp126 is a catalytic residue.

Belongs to the MoaC family. As to quaternary structure, homohexamer; trimer of dimers.

The enzyme catalyses (8S)-3',8-cyclo-7,8-dihydroguanosine 5'-triphosphate = cyclic pyranopterin phosphate + diphosphate. The protein operates within cofactor biosynthesis; molybdopterin biosynthesis. Catalyzes the conversion of (8S)-3',8-cyclo-7,8-dihydroguanosine 5'-triphosphate to cyclic pyranopterin monophosphate (cPMP). This chain is Cyclic pyranopterin monophosphate synthase, found in Herpetosiphon aurantiacus (strain ATCC 23779 / DSM 785 / 114-95).